Reading from the N-terminus, the 218-residue chain is Cytochrome b6 (218 aa).

The chain crosses the membrane as a helical span at residues 35-55 (IFYCLGGITLVCFLIQFATGF). Heme c is bound at residue cysteine 38. Heme b-binding residues include histidine 89 and histidine 103. The next 3 membrane-spanning stretches (helical) occupy residues 93–113 (ASMM…TGGF), 119–139 (LTWI…VTGY), and 189–209 (LHTF…FLMI). Histidine 190 and histidine 205 together coordinate heme b.

Belongs to the cytochrome b family. PetB subfamily. As to quaternary structure, the 4 large subunits of the cytochrome b6-f complex are cytochrome b6, subunit IV (17 kDa polypeptide, PetD), cytochrome f and the Rieske protein, while the 4 small subunits are PetG, PetL, PetM and PetN. The complex functions as a dimer. Heme b is required as a cofactor. It depends on heme c as a cofactor.

The protein localises to the cellular thylakoid membrane. In terms of biological role, component of the cytochrome b6-f complex, which mediates electron transfer between photosystem II (PSII) and photosystem I (PSI), cyclic electron flow around PSI, and state transitions. In Prochlorococcus marinus (strain NATL1A), this protein is Cytochrome b6.